The primary structure comprises 246 residues: Pyrroloquinoline-quinone synthase (246 aa).

The protein belongs to the PqqC family.

The catalysed reaction is 6-(2-amino-2-carboxyethyl)-7,8-dioxo-1,2,3,4,7,8-hexahydroquinoline-2,4-dicarboxylate + 3 O2 = pyrroloquinoline quinone + 2 H2O2 + 2 H2O + H(+). Its pathway is cofactor biosynthesis; pyrroloquinoline quinone biosynthesis. Functionally, ring cyclization and eight-electron oxidation of 3a-(2-amino-2-carboxyethyl)-4,5-dioxo-4,5,6,7,8,9-hexahydroquinoline-7,9-dicarboxylic-acid to PQQ. The chain is Pyrroloquinoline-quinone synthase from Acidiphilium cryptum (strain JF-5).